A 160-amino-acid chain; its full sequence is Small ribosomal subunit protein uS7 (160 aa).

This sequence belongs to the universal ribosomal protein uS7 family. Part of the 30S ribosomal subunit. Contacts proteins S9 and S11.

Functionally, one of the primary rRNA binding proteins, it binds directly to 16S rRNA where it nucleates assembly of the head domain of the 30S subunit. Is located at the subunit interface close to the decoding center, probably blocks exit of the E-site tRNA. This is Small ribosomal subunit protein uS7 from Rickettsia typhi (strain ATCC VR-144 / Wilmington).